The primary structure comprises 328 residues: dITP/XTP pyrophosphatase (328 aa).

Residues 1-129 (MSEKIYEYKD…ATSEQGFGDI (129 aa)) are unknown. Residues 130-324 (ILIATRNEGK…KLMEVFPAWQ (195 aa)) are NTP pyrophosphatase. Substrate is bound at residue 134–139 (TRNEGK). Asp-196 (proton acceptor) is an active-site residue. Asp-196 serves as a coordination point for Mg(2+). Residues Ser-197, 280-283 (FGYD), Lys-303, and 308-309 (HR) each bind substrate.

Belongs to the HAM1 NTPase family. In terms of assembly, homodimer. The cofactor is Mg(2+).

The enzyme catalyses XTP + H2O = XMP + diphosphate + H(+). The catalysed reaction is dITP + H2O = dIMP + diphosphate + H(+). It carries out the reaction ITP + H2O = IMP + diphosphate + H(+). In terms of biological role, pyrophosphatase that catalyzes the hydrolysis of nucleoside triphosphates to their monophosphate derivatives, with a high preference for the non-canonical purine nucleotides XTP (xanthosine triphosphate), dITP (deoxyinosine triphosphate) and ITP. Seems to function as a house-cleaning enzyme that removes non-canonical purine nucleotides from the nucleotide pool, thus preventing their incorporation into DNA/RNA and avoiding chromosomal lesions. This Streptococcus pyogenes serotype M1 protein is dITP/XTP pyrophosphatase.